We begin with the raw amino-acid sequence, 162 residues long: Caveolin-2 (162 aa).

At 1–86 the chain is on the cytoplasmic side; the sequence is MGLETEKADV…FEISKYVIYK (86 aa). Tyrosine 19 is modified (phosphotyrosine; by SRC). Residues serine 20 and serine 23 each carry the phosphoserine modification. The residue at position 27 (tyrosine 27) is a Phosphotyrosine; by SRC. Serine 36 bears the Phosphoserine mark. Positions 87 to 107 form an intramembrane region, helical; it reads FLTVFLAIPLAFIAGILFATL. The Cytoplasmic segment spans residues 108 to 162; the sequence is SCLHIWILMPFVKTCLMVLPSVQTIWKSVTDVVIGPLCTSVGRIFSSVSMQLSHD.

Belongs to the caveolin family. As to quaternary structure, monomer or homodimer. Interacts with CAV1; the interaction forms a stable heterooligomeric complex that is required for targeting to lipid rafts and for caveolae formation. Tyrosine phosphorylated forms do not form heterooligomers with the Tyr-19-phosphorylated form existing as a monomer or dimer and the Tyr-27-form as a monomer only. Interacts (tyrosine phosphorylated form) with the SH2 domain-containing proteins, RASA1, NCK1 and SRC. Interacts (tyrosine phosphorylated form) with INSR; the interaction (Tyr-27-phosphorylated form) is increased on insulin stimulation. Interacts (Tyr-19-phosphorylated form) with MAPK1 (phosphorylated form); the interaction, promoted by insulin, leads to nuclear location and MAPK1 activation. Interacts with STAT3; the interaction is increased on insulin-induced tyrosine phosphorylation leading to STAT activation. Post-translationally, phosphorylated on serine and tyrosine residues. CAV1 promotes phosphorylation on Ser-23 which targets the complex to the plasma membrane, lipid rafts and caveolae. Phosphorylation on Ser-36 appears to modulate mitosis in endothelial cells. Phosphorylation on both Tyr-19 and Tyr-27 is required for insulin-induced 'Ser-727' phosphorylation of STAT3 and its activation. Phosphorylation on Tyr-19 is required for insulin-induced phosphorylation of MAPK1 and DNA binding of STAT3. Tyrosine phosphorylation is induced by both EGF and insulin. As to expression, in the retina, mainly expressed in vessels, but also diffuse expression in the inner and outer plexiform layers and in the inner nuclear layer.

It localises to the nucleus. It is found in the cytoplasm. Its subcellular location is the golgi apparatus membrane. The protein resides in the cell membrane. The protein localises to the membrane. It localises to the caveola. Functionally, may act as a scaffolding protein within caveolar membranes. Interacts directly with G-protein alpha subunits and can functionally regulate their activity. Acts as an accessory protein in conjunction with CAV1 in targeting to lipid rafts and driving caveolae formation. The Ser-36 phosphorylated form has a role in modulating mitosis in endothelial cells. Positive regulator of cellular mitogenesis of the MAPK signaling pathway. Required for the insulin-stimulated nuclear translocation and activation of MAPK1 and STAT3, and the subsequent regulation of cell cycle progression. This chain is Caveolin-2 (Cav2), found in Rattus norvegicus (Rat).